The primary structure comprises 206 residues: Type III pantothenate kinase (206 aa).

5–12 (DIGNTFLH) contributes to the ATP binding site. Substrate is bound by residues Tyr69 and 73–76 (GVDR). Catalysis depends on Asp75, which acts as the Proton acceptor. Residue Asp90 coordinates K(+). Ser93 contacts ATP. Thr145 serves as a coordination point for substrate.

The protein belongs to the type III pantothenate kinase family. As to quaternary structure, homodimer. NH4(+) is required as a cofactor. It depends on K(+) as a cofactor.

Its subcellular location is the cytoplasm. It catalyses the reaction (R)-pantothenate + ATP = (R)-4'-phosphopantothenate + ADP + H(+). Its pathway is cofactor biosynthesis; coenzyme A biosynthesis; CoA from (R)-pantothenate: step 1/5. Catalyzes the phosphorylation of pantothenate (Pan), the first step in CoA biosynthesis. This is Type III pantothenate kinase from Helicobacter hepaticus (strain ATCC 51449 / 3B1).